We begin with the raw amino-acid sequence, 334 residues long: Holliday junction branch migration complex subunit RuvB (334 aa).

Residues 4 to 186 (ADRLIAPENP…FGITQRLEYY (183 aa)) form a large ATPase domain (RuvB-L) region. ATP-binding positions include Ile25, Arg26, Gly67, Lys70, Thr71, Thr72, 133-135 (EDY), Arg176, Tyr186, and Arg223. Thr71 contributes to the Mg(2+) binding site. Positions 187 to 257 (KVQDLQNIVQ…VADKALNMLD (71 aa)) are small ATPAse domain (RuvB-S). The interval 260–334 (AQGFDYMDRK…RAYLHFGIEK (75 aa)) is head domain (RuvB-H). Residues Arg315 and Arg320 each contribute to the DNA site.

Belongs to the RuvB family. In terms of assembly, homohexamer. Forms an RuvA(8)-RuvB(12)-Holliday junction (HJ) complex. HJ DNA is sandwiched between 2 RuvA tetramers; dsDNA enters through RuvA and exits via RuvB. An RuvB hexamer assembles on each DNA strand where it exits the tetramer. Each RuvB hexamer is contacted by two RuvA subunits (via domain III) on 2 adjacent RuvB subunits; this complex drives branch migration. In the full resolvosome a probable DNA-RuvA(4)-RuvB(12)-RuvC(2) complex forms which resolves the HJ.

It is found in the cytoplasm. It catalyses the reaction ATP + H2O = ADP + phosphate + H(+). The RuvA-RuvB-RuvC complex processes Holliday junction (HJ) DNA during genetic recombination and DNA repair, while the RuvA-RuvB complex plays an important role in the rescue of blocked DNA replication forks via replication fork reversal (RFR). RuvA specifically binds to HJ cruciform DNA, conferring on it an open structure. The RuvB hexamer acts as an ATP-dependent pump, pulling dsDNA into and through the RuvAB complex. RuvB forms 2 homohexamers on either side of HJ DNA bound by 1 or 2 RuvA tetramers; 4 subunits per hexamer contact DNA at a time. Coordinated motions by a converter formed by DNA-disengaged RuvB subunits stimulates ATP hydrolysis and nucleotide exchange. Immobilization of the converter enables RuvB to convert the ATP-contained energy into a lever motion, pulling 2 nucleotides of DNA out of the RuvA tetramer per ATP hydrolyzed, thus driving DNA branch migration. The RuvB motors rotate together with the DNA substrate, which together with the progressing nucleotide cycle form the mechanistic basis for DNA recombination by continuous HJ branch migration. Branch migration allows RuvC to scan DNA until it finds its consensus sequence, where it cleaves and resolves cruciform DNA. The polypeptide is Holliday junction branch migration complex subunit RuvB (Vibrio parahaemolyticus serotype O3:K6 (strain RIMD 2210633)).